A 148-amino-acid chain; its full sequence is Endoribonuclease YbeY (148 aa).

H102, H106, and H112 together coordinate Zn(2+).

The protein belongs to the endoribonuclease YbeY family. The cofactor is Zn(2+).

The protein resides in the cytoplasm. Its function is as follows. Single strand-specific metallo-endoribonuclease involved in late-stage 70S ribosome quality control and in maturation of the 3' terminus of the 16S rRNA. This is Endoribonuclease YbeY from Phytoplasma mali (strain AT).